Consider the following 807-residue polypeptide: Glycerol-3-phosphate acyltransferase (807 aa).

The short motif at 305–310 (CHRSHM) is the HXXXXD motif element.

Belongs to the GPAT/DAPAT family.

The protein localises to the cell inner membrane. It carries out the reaction sn-glycerol 3-phosphate + an acyl-CoA = a 1-acyl-sn-glycero-3-phosphate + CoA. It participates in phospholipid metabolism; CDP-diacylglycerol biosynthesis; CDP-diacylglycerol from sn-glycerol 3-phosphate: step 1/3. The protein is Glycerol-3-phosphate acyltransferase of Klebsiella pneumoniae subsp. pneumoniae (strain ATCC 700721 / MGH 78578).